A 378-amino-acid polypeptide reads, in one-letter code: MFMVVCSNLRRPGHVGAASAARNINWLISEGYTPPIRAMARPYVQAPEARPVPDERYPGSQQDRKDIATQTVRSSKPKDLRPPSPPTPSQTLNSSSLPPPMSDQDADPSLDVPTGVAMPYNIDWIFPRLRNPSKFWYVVSQFVVSAVGIFSKVVLMFLNKPRVYNRERLIQLITKRPKGIPLVTVSNHYSCFDDPGLWGCLPLGIVCNTYKIRWSMAAHDICFTNKLHSLFFMFGKCIPVVRGIGVYQDAINLCIEKAALGHWIHVFPEGKVNMDKEELRLKWGVGRIIYESPKIPIILPMWHEGMDDLLPNVEPYVIQRGKQVTLNVGQPLDLNDFILDLKKRQVPEPTARKLITDKIQEAFRDLRAETEKLHRERN.

Topologically, residues 1–137 (MFMVVCSNLR…RLRNPSKFWY (137 aa)) are mitochondrial intermembrane. Residues 46–112 (APEARPVPDE…DQDADPSLDV (67 aa)) are disordered. A compositionally biased stretch (basic and acidic residues) spans 51–67 (PVPDERYPGSQQDRKDI). The stretch at 138 to 158 (VVSQFVVSAVGIFSKVVLMFL) is an intramembrane region. At 159–378 (NKPRVYNRER…ETEKLHRERN (220 aa)) the chain is on the mitochondrial intermembrane side. Residues 188-193 (HYSCFD) carry the HXXXXD motif motif.

Belongs to the taffazin family. In terms of assembly, associates with multiple protein complexes. Association with large protein complexes occurs only in the presence of cardiolipin.

It localises to the mitochondrion outer membrane. It is found in the mitochondrion inner membrane. The protein resides in the mitochondrion. Its subcellular location is the mitochondrion membrane. The protein localises to the golgi apparatus membrane. It localises to the endoplasmic reticulum membrane. The catalysed reaction is 1'-[1,2-diacyl-sn-glycero-3-phospho],3'-[1-acyl-sn-glycero-3-phospho]-glycerol + a 1,2-diacyl-sn-glycero-3-phosphocholine = a cardiolipin + a 1-acyl-sn-glycero-3-phosphocholine. It catalyses the reaction 1'-[1,2-di-(9Z,12Z-octadecadienoyl)-sn-glycero-3-phospho]-3'-[1-(9Z,12Z-octadecadienoyl)-sn-glycero-3-phospho]-glycerol + 1-hexadecanoyl-2-(9Z,12Z-octadecadienoyl)-sn-glycero-3-phosphocholine = 1',3'-bis-[1,2-di-(9Z,12Z-octadecadienoyl)-sn-glycero-3-phospho]-glycerol + 1-hexadecanoyl-sn-glycero-3-phosphocholine. It carries out the reaction 1'-[1,2-di-(9Z,12Z-octadecadienoyl)-sn-glycero-3-phospho]-3'-[2-(9Z,12Z-octadecadienoyl)-sn-glycero-3-phospho]-glycerol + 1-hexadecanoyl-2-(9Z,12Z-octadecadienoyl)-sn-glycero-3-phosphocholine = 1',3'-bis-[1,2-di-(9Z,12Z-octadecadienoyl)-sn-glycero-3-phospho]-glycerol + 1-hexadecanoyl-sn-glycero-3-phosphocholine. The enzyme catalyses 1,2-di-(9Z,12Z-octadecadienoyl)-sn-glycero-3-phosphocholine + 1'-[1,2-di-(9Z,12Z-octadecadienoyl)-sn-glycero-3-phospho]-3'-[1-(9Z,12Z-octadecadienoyl)-sn-glycero-3-phospho]-glycerol = 1-(9Z,12Z)-octadecadienoyl-sn-glycero-3-phosphocholine + 1',3'-bis-[1,2-di-(9Z,12Z-octadecadienoyl)-sn-glycero-3-phospho]-glycerol. The catalysed reaction is 1-tetradecanoyl-sn-glycero-3-phosphocholine + 1',3'-bis-[1,2-di-(9Z,12Z-octadecadienoyl)-sn-glycero-3-phospho]-glycerol = 1-tetradecanoyl-2-(9Z,12Z-octadecadienoyl)-sn-glycero-3-phosphocholine + 1'-[1,2-di-(9Z,12Z-octadecadienoyl)-sn-glycero-3-phospho]-3'-[1-(9Z,12Z-octadecadienoyl)-sn-glycero-3-phospho]-glycerol. It catalyses the reaction 1',3'-bis[1,2-di-(9Z-octadecenoyl)-sn-glycero-3-phospho]-glycerol + 1-nonadecanoyl-sn-glycero-3-phosphocholine = 1-nonadecanoyl-2-(9Z-octadecenoyl)-sn-glycero-3-phosphocholine + 1'-[1,2-di-(9Z-octadecenoyl)-sn-glycero-3-phospho]-3'-[1-(9Z-octadecenoyl)-sn-glycero-3-phospho]-glycerol. It carries out the reaction a 1,2-diacyl-sn-glycero-3-phospho-(1'-sn-glycerol) + a 1-acyl-sn-glycero-3-phosphocholine = 1-acyl-sn-glycero-3-phospho-(1'-sn-glycerol) + a 1,2-diacyl-sn-glycero-3-phosphocholine. The enzyme catalyses 1-hexadecanoyl-2-(9Z,12Z-octadecadienoyl)-sn-glycero-3-phospho-(1'-sn-glycerol) + 1-hexadecanoyl-sn-glycero-3-phosphocholine = 1-hexadecanoyl-sn-glycero-3-phospho-(1'-sn-glycerol) + 1-hexadecanoyl-2-(9Z,12Z-octadecadienoyl)-sn-glycero-3-phosphocholine. The catalysed reaction is 1,2-di-(9Z-octadecenoyl)-sn-glycero-3-phospho-(1'-sn-glycerol) + 1-nonadecanoyl-sn-glycero-3-phosphocholine = 1-nonadecanoyl-2-(9Z-octadecenoyl)-sn-glycero-3-phosphocholine + 1-(9Z-octadecenoyl)-sn-glycero-3-phospho-(1'-sn-glycerol). It catalyses the reaction a 1,2-diacyl-sn-glycero-3-phosphate + a 1-acyl-sn-glycero-3-phosphocholine = a 1-acyl-sn-glycero-3-phosphate + a 1,2-diacyl-sn-glycero-3-phosphocholine. It carries out the reaction 1-hexadecanoyl-2-(9Z,12Z-octadecadienoyl)-sn-glycero-3-phosphate + 1-hexadecanoyl-sn-glycero-3-phosphocholine = 1-hexadecanoyl-2-(9Z,12Z-octadecadienoyl)-sn-glycero-3-phosphocholine + 1-hexadecanoyl-sn-glycero-3-phosphate. The enzyme catalyses 1-hexadecanoyl-2-(9Z,12Z-octadecadienoyl)-sn-glycero-3-phosphocholine + 1-(9Z-octadecenoyl)-sn-glycero-3-phosphate = 1-(9Z)-octadecenoyl-2-(9Z,12Z)-octadecadienoyl-sn-glycero-3-phosphate + 1-hexadecanoyl-sn-glycero-3-phosphocholine. The catalysed reaction is a 1-acyl-sn-glycero-3-phosphocholine + a 1,2-diacyl-sn-glycero-3-phosphoethanolamine = a 1-acyl-sn-glycero-3-phosphoethanolamine + a 1,2-diacyl-sn-glycero-3-phosphocholine. It catalyses the reaction 1-hexadecanoyl-2-(9Z,12Z-octadecadienoyl)-sn-glycero-3-phosphoethanolamine + 1-hexadecanoyl-sn-glycero-3-phosphocholine = 1-hexadecanoyl-2-(9Z,12Z-octadecadienoyl)-sn-glycero-3-phosphocholine + 1-hexadecanoyl-sn-glycero-3-phosphoethanolamine. It carries out the reaction 1,2-di-(9Z,12Z-octadecadienoyl)-sn-glycero-3-phosphoethanolamine + 1-tetradecanoyl-sn-glycero-3-phosphocholine = 1-(9Z,12Z-octadecadienoyl)-sn-glycero-3-phosphoethanolamine + 1-tetradecanoyl-2-(9Z,12Z-octadecadienoyl)-sn-glycero-3-phosphocholine. The enzyme catalyses 1'-[1,2-diacyl-sn-glycero-3-phospho],3'-[1-acyl-sn-glycero-3-phospho]-glycerol + a 1,2-diacyl-sn-glycero-3-phosphoethanolamine = a cardiolipin + a 1-acyl-sn-glycero-3-phosphoethanolamine. The catalysed reaction is 1-hexadecanoyl-2-(9Z,12Z-octadecadienoyl)-sn-glycero-3-phosphoethanolamine + 1'-[1,2-di-(9Z,12Z-octadecadienoyl)-sn-glycero-3-phospho]-3'-[1-(9Z,12Z-octadecadienoyl)-sn-glycero-3-phospho]-glycerol = 1',3'-bis-[1,2-di-(9Z,12Z-octadecadienoyl)-sn-glycero-3-phospho]-glycerol + 1-hexadecanoyl-sn-glycero-3-phosphoethanolamine. It catalyses the reaction 1'-[1-(9Z,12Z-octadecadienoyl)-2-(9Z-octadecenoyl)-sn-glycero-3-phospho]-3'-[1-(9Z,12Z-octadecadienoyl)-sn-glycero-3-phospho]-glycerol + 1',3'-bis-[1,2-di-(9Z,12Z-octadecadienoyl)-sn-glycero-3-phospho]-glycerol = 1'-[1,2-di-(9Z,12Z-octadecadienoyl)-sn-glycero-3-phospho]-3'-[1-(9Z,12Z-octadecadienoyl)-2-(9Z-octadecenoyl)-sn-glycero-3-phospho]-glycerol + 1'-[1,2-di-(9Z,12Z-octadecadienoyl)-sn-glycero-3-phospho]-3'-[1-(9Z,12Z-octadecadienoyl)-sn-glycero-3-phospho]-glycerol. It carries out the reaction 1,2-di-(9Z-hexadecenoyl)-sn-glycero-3-phosphocholine + 1-hexadecanoyl-sn-glycero-3-phosphocholine = 1-hexadecanoyl-2-(9Z-hexadecenoyl)-sn-glycero-3-phosphocholine + 1-(9Z-hexadecenoyl)-sn-glycero-3-phosphocholine. The enzyme catalyses 1,2-dioctadecanoyl-sn-glycero-3-phosphocholine + 1-hexadecanoyl-sn-glycero-3-phosphocholine = 1-hexadecanoyl-2-octadecanoyl-sn-glycero-3-phosphocholine + 1-octadecanoyl-sn-glycero-3-phosphocholine. The catalysed reaction is 1,2-di-(9Z-octadecenoyl)-sn-glycero-3-phosphocholine + 1-hexadecanoyl-sn-glycero-3-phosphocholine = 1-hexadecanoyl-2-(9Z-octadecenoyl)-sn-glycero-3-phosphocholine + 1-(9Z-octadecenoyl)-sn-glycero-3-phosphocholine. It catalyses the reaction 1,2-di-(9Z,12Z-octadecadienoyl)-sn-glycero-3-phosphocholine + 1-(9Z-octadecenoyl)-sn-glycero-3-phosphocholine = 1-(9Z)-octadecenoyl-2-(9Z,12Z)-octadecadienoyl-sn-glycero-3-phosphocholine + 1-(9Z,12Z)-octadecadienoyl-sn-glycero-3-phosphocholine. It carries out the reaction 1,2-di-(9Z,12Z,15Z-octadecatrienoyl)-sn-glycero-3-phosphocholine + 1-tetradecanoyl-sn-glycero-3-phosphocholine = 1-tetradecanoyl-2-(9Z,12Z,15Z-octadecatrienoyl)-sn-glycero-3-phosphocholine + 1-(9Z,12Z,15Z-octadecatrienoyl)-sn-glycero-3-phosphocholine. The enzyme catalyses 1-nonadecanoyl-sn-glycero-3-phosphocholine + 1-octadecanoyl-2-(9Z-octadecenoyl)-sn-glycero-3-phosphocholine = 1-nonadecanoyl-2-(9Z-octadecenoyl)-sn-glycero-3-phosphocholine + 1-octadecanoyl-sn-glycero-3-phosphocholine. The catalysed reaction is 1-(9Z)-octadecenoyl-2-octadecanoyl-sn-glycero-3-phosphocholine + 1-nonadecanoyl-sn-glycero-3-phosphocholine = 2-octadecanoyl-sn-glycero-3-phosphocholine + 1-nonadecanoyl-2-(9Z-octadecenoyl)-sn-glycero-3-phosphocholine. It participates in phospholipid metabolism. Its function is as follows. Acyltransferase required to remodel newly synthesized phospholipid cardiolipin (1',3'-bis-[1,2-diacyl-sn-glycero-3-phospho]-glycerol or CL), a key component of the mitochondrial inner membrane, with tissue specific acyl chains necessary for adequate mitochondrial function. Its role in cellular physiology is to improve mitochondrial performance. CL is critical for the coassembly of lipids and proteins in mitochondrial membranes. For instance, remodeling of the acyl groups of CL in the mitochondrial inner membrane affects the assembly and stability of respiratory chain complex IV and its supercomplex forms. Catalyzes the transacylation between phospholipids and lysophospholipids, with the highest rate being between phosphatidylcholine (1,2-diacyl-sn-glycero-3-phosphocholine or PC) and CL. Catalyzes both 1-acyl-sn-glycero-3-phosphocholine (lysophosphatidylcholine or LPC) reacylation and PC-CL transacylation, that means, it exchanges acyl groups between CL and PC by a combination of forward and reverse transacylations. Also catalyzes transacylations between other phospholipids such as phosphatidylethanolamine (1,2-diacyl-sn-glycero-3-phosphoethanolamine or PE) and CL, between PC and PE, and between PC and phosphatidate (1,2-diacyl-sn-glycero-3-phosphate or PA), although at lower rate. Not regiospecific, it transfers acyl groups into any of the sn-1 and sn-2 positions of the monolysocardiolipin (MLCL), which is an important prerequisite for uniformity and symmetry in CL acyl distribution. Cannot transacylate dilysocardiolipin (DLCL), thus, the role of MLCL is limited to that of an acyl acceptor. CoA-independent, it can reshuffle molecular species within a single phospholipid class. Redistributes fatty acids between MLCL, CL, and other lipids, which prolongs the half-life of CL. Its action is completely reversible, which allows for cyclic changes, such as fission and fusion or bending and flattening of the membrane. Hence, by contributing to the flexibility of the lipid composition, it plays an important role in the dynamics of mitochondria membranes. Essential for the final stage of spermatogenesis, spermatid individualization. Required for the initiation of mitophagy. This is Tafazzin from Drosophila melanogaster (Fruit fly).